Reading from the N-terminus, the 270-residue chain is Structure-specific endonuclease subunit SLX1 (270 aa).

Positions 9–94 constitute a GIY-YIG domain; sequence RFFGVYLLYC…PQASRRLTHV (86 aa). An SLX1-type zinc finger spans residues 182–234; that stretch reads CSLCARLLQDEEGPLCCPHPGCPLRAHIICLAEEFLQEEPGQLLPLEGHCPSC.

Belongs to the SLX1 family. Forms a heterodimer with SLX4. A divalent metal cation serves as cofactor. As to expression, expressed in testis, colon, bone marrow, brain, thymus and to a lesser extent in heart, kidney, skeletal muscle and spleen.

It is found in the nucleus. Catalytic subunit of the SLX1-SLX4 structure-specific endonuclease that resolves DNA secondary structures generated during DNA repair and recombination. Has endonuclease activity towards branched DNA substrates, introducing single-strand cuts in duplex DNA close to junctions with ss-DNA. Has a preference for 5'-flap structures, and promotes symmetrical cleavage of static and migrating Holliday junctions (HJs). Resolves HJs by generating two pairs of ligatable, nicked duplex products. In Mus musculus (Mouse), this protein is Structure-specific endonuclease subunit SLX1 (Slx1b).